We begin with the raw amino-acid sequence, 169 residues long: MLIYKDILTGDEIISDSYNLKEIDGVVYEADCTKITVGGESFDTGANASAEEQEEGAEDSAETKIDVVYSFRLNETGFDKKGYLTYLKGYMKAVKDGLKKKGADEATIKDFETKASGYAKKIISNFKDYEFFTGESMNPDGMIVLLNYREDGVTPYVTVWKHGLEEMKV.

A TCTP domain is found at 1–169 (MLIYKDILTG…WKHGLEEMKV (169 aa)).

Belongs to the TCTP family.

The protein localises to the cytoplasm. It is found in the cytoskeleton. Functionally, involved in protein synthesis. Involved in microtubule stabilization. This Alternaria alternata (Alternaria rot fungus) protein is Translationally-controlled tumor protein homolog.